The following is a 1412-amino-acid chain: DNA-directed RNA polymerase subunit beta' (1412 aa).

The Zn(2+) site is built by cysteine 70, cysteine 72, cysteine 85, and cysteine 88. Residues aspartate 460, aspartate 462, and aspartate 464 each coordinate Mg(2+). Cysteine 819, cysteine 893, cysteine 900, and cysteine 903 together coordinate Zn(2+). The segment at 1392–1412 (EEAFEFGTPSTPAEEPQHPAE) is disordered.

This sequence belongs to the RNA polymerase beta' chain family. In terms of assembly, the RNAP catalytic core consists of 2 alpha, 1 beta, 1 beta' and 1 omega subunit. When a sigma factor is associated with the core the holoenzyme is formed, which can initiate transcription. It depends on Mg(2+) as a cofactor. Requires Zn(2+) as cofactor.

The catalysed reaction is RNA(n) + a ribonucleoside 5'-triphosphate = RNA(n+1) + diphosphate. DNA-dependent RNA polymerase catalyzes the transcription of DNA into RNA using the four ribonucleoside triphosphates as substrates. This Burkholderia thailandensis (strain ATCC 700388 / DSM 13276 / CCUG 48851 / CIP 106301 / E264) protein is DNA-directed RNA polymerase subunit beta'.